We begin with the raw amino-acid sequence, 499 residues long: MDNMNHEELNDQLLVRREKLHNLREQGIDPFGKRFERTNSTTDLVSLYGEFSKEELEEKEITVSIAGRIMTKRGKGKAGFAHIQDLHGQVQIYVRKDTVGDEEYELFTTADLGDLVGIEGKVFKTNVGELSVKATGFTLLTKSLRPLPDKYHGLKDVEQRYRQRYLDLITSMESRETFVTRSKIIREMRRYLDDNGYLEVETPMMHAIAGGASARPFTTHHNALDMELYMRIAIELHLKRLIVGGLEKVYEIGRVFRNEGVSTRHNPEFTMIELYEAYADYNDIMKLTENMVAHIAKKVLGTTTIQYGDYEINLEPEWTRLHMVDAIKQHSGADFWNPMSVEEARELAKEHNVEIKDTMEVGHIINEFFEQKVEDKLIQPTFIYGHPVEISPLAKKNDEDPRFTDRFELFIVAREHANAFTELNDPIDQKERFEAQLKEREQGNDEAHMMDDDYIEALEYGMPPTGGLGIGIDRLVMLLTNAPSIRDVLLFPAMRHKQD.

Residues Glu408 and Glu415 each coordinate Mg(2+).

Belongs to the class-II aminoacyl-tRNA synthetase family. As to quaternary structure, homodimer. The cofactor is Mg(2+).

Its subcellular location is the cytoplasm. It carries out the reaction tRNA(Lys) + L-lysine + ATP = L-lysyl-tRNA(Lys) + AMP + diphosphate. This Bacillus cereus (strain G9842) protein is Lysine--tRNA ligase.